Here is a 244-residue protein sequence, read N- to C-terminus: Small ribosomal subunit protein eS4 (244 aa).

The S4 RNA-binding domain occupies 37–123; sequence VPLAILLKYY…AKYKFVRIMN (87 aa).

This sequence belongs to the eukaryotic ribosomal protein eS4 family.

This is Small ribosomal subunit protein eS4 (rps4e) from Sulfolobus acidocaldarius (strain ATCC 33909 / DSM 639 / JCM 8929 / NBRC 15157 / NCIMB 11770).